A 319-amino-acid chain; its full sequence is tRNA N6-adenosine threonylcarbamoyltransferase (319 aa).

Positions 110 and 114 each coordinate Fe cation. Residues 132–136, Asp165, Gly178, Asp182, and Asn271 each bind substrate; that span reads VVSGG. Asp300 is a binding site for Fe cation.

It belongs to the KAE1 / TsaD family. The cofactor is Fe(2+).

It is found in the cytoplasm. The catalysed reaction is L-threonylcarbamoyladenylate + adenosine(37) in tRNA = N(6)-L-threonylcarbamoyladenosine(37) in tRNA + AMP + H(+). In terms of biological role, required for the formation of a threonylcarbamoyl group on adenosine at position 37 (t(6)A37) in tRNAs that read codons beginning with adenine. Is involved in the transfer of the threonylcarbamoyl moiety of threonylcarbamoyl-AMP (TC-AMP) to the N6 group of A37, together with TsaE and TsaB. TsaD likely plays a direct catalytic role in this reaction. This Mycoplasma capricolum subsp. capricolum (strain California kid / ATCC 27343 / NCTC 10154) protein is tRNA N6-adenosine threonylcarbamoyltransferase.